A 118-amino-acid chain; its full sequence is Small ribosomal subunit protein uS13 (118 aa).

Residues 94–118 (SLPLRGQRTKTNARTRKGPRKPIKK) form a disordered region.

The protein belongs to the universal ribosomal protein uS13 family. Part of the 30S ribosomal subunit. Forms a loose heterodimer with protein S19. Forms two bridges to the 50S subunit in the 70S ribosome.

Its function is as follows. Located at the top of the head of the 30S subunit, it contacts several helices of the 16S rRNA. In the 70S ribosome it contacts the 23S rRNA (bridge B1a) and protein L5 of the 50S subunit (bridge B1b), connecting the 2 subunits; these bridges are implicated in subunit movement. Contacts the tRNAs in the A and P-sites. This is Small ribosomal subunit protein uS13 from Vibrio vulnificus (strain CMCP6).